The chain runs to 915 residues: Probable dipeptidyl-aminopeptidase B (915 aa).

Disordered stretches follow at residues 1-20 (MAGE…TRGS) and 52-74 (QDSR…NEEE). The Cytoplasmic portion of the chain corresponds to 1–95 (MAGEKGGSRD…GGKTVQKTTK (95 aa)). A compositionally biased stretch (basic and acidic residues) spans 55 to 72 (RLGEKDQRDDDHDQYRNE). The helical; Signal-anchor for type II membrane protein transmembrane segment at 96-116 (IVLWALLFLCVGGWSLAFVIF) threads the bilayer. Topologically, residues 117 to 915 (LFRGHDTPQT…RAETWGGLPV (799 aa)) are vacuolar. N-linked (GlcNAc...) asparagine glycans are attached at residues asparagine 133, asparagine 179, asparagine 349, and asparagine 572. The active-site Charge relay system is the serine 754. N-linked (GlcNAc...) asparagine glycosylation occurs at asparagine 813. Active-site charge relay system residues include aspartate 831 and histidine 864. Asparagine 900 is a glycosylation site (N-linked (GlcNAc...) asparagine).

This sequence belongs to the peptidase S9B family.

The protein localises to the vacuole membrane. It catalyses the reaction Release of an N-terminal dipeptide, Xaa-Yaa-|-Zaa-, from a polypeptide, preferentially when Yaa is Pro, provided Zaa is neither Pro nor hydroxyproline.. Type IV dipeptidyl-peptidase which removes N-terminal dipeptides sequentially from polypeptides having unsubstituted N-termini provided that the penultimate residue is proline. The chain is Probable dipeptidyl-aminopeptidase B (DAPB) from Blastomyces gilchristii (strain SLH14081) (Blastomyces dermatitidis).